Here is a 508-residue protein sequence, read N- to C-terminus: BTB/POZ domain-containing protein At3g03510 (508 aa).

Residues 11-77 (QDLDLYVKGV…CYGYKIELSA (67 aa)) form the BTB domain. Residues 156-414 (TRLLQDLITL…MQVLFVSQMQ (259 aa)) enclose the NPH3 domain. Residue tyrosine 355 is modified to Phosphotyrosine.

This sequence belongs to the NPH3 family.

It functions in the pathway protein modification; protein ubiquitination. Its function is as follows. May act as a substrate-specific adapter of an E3 ubiquitin-protein ligase complex (CUL3-RBX1-BTB) which mediates the ubiquitination and subsequent proteasomal degradation of target proteins. The sequence is that of BTB/POZ domain-containing protein At3g03510 from Arabidopsis thaliana (Mouse-ear cress).